Here is a 247-residue protein sequence, read N- to C-terminus: Nodulation protein H (247 aa).

Residues 1 to 17 (MTHSTLPPQPFAILAMP) are hydrophobic.

In terms of biological role, required for the formation of sulfated nod factor. Proposed to transfer activated sulfate (PAPS) to a N-acetylglucosamine of the nod factor. This Rhizobium meliloti (strain 1021) (Ensifer meliloti) protein is Nodulation protein H (nodH).